The primary structure comprises 61 residues: Photosystem II reaction center protein K (61 aa).

Residues 1–24 (MLNTFSLIGICLNSTLFSSSFFFG) constitute a propeptide that is removed on maturation. A helical membrane pass occupies residues 36-56 (IVDIMPVIPLFFFLLAFVWQA).

This sequence belongs to the PsbK family. PSII is composed of 1 copy each of membrane proteins PsbA, PsbB, PsbC, PsbD, PsbE, PsbF, PsbH, PsbI, PsbJ, PsbK, PsbL, PsbM, PsbT, PsbX, PsbY, PsbZ, Psb30/Ycf12, at least 3 peripheral proteins of the oxygen-evolving complex and a large number of cofactors. It forms dimeric complexes.

Its subcellular location is the plastid. The protein localises to the chloroplast thylakoid membrane. Its function is as follows. One of the components of the core complex of photosystem II (PSII). PSII is a light-driven water:plastoquinone oxidoreductase that uses light energy to abstract electrons from H(2)O, generating O(2) and a proton gradient subsequently used for ATP formation. It consists of a core antenna complex that captures photons, and an electron transfer chain that converts photonic excitation into a charge separation. This Nicotiana tomentosiformis (Tobacco) protein is Photosystem II reaction center protein K.